Consider the following 362-residue polypeptide: Heat-inducible transcription repressor HrcA (362 aa).

It belongs to the HrcA family.

In terms of biological role, negative regulator of class I heat shock genes (grpE-dnaK-dnaJ and groELS operons). Prevents heat-shock induction of these operons. This Bradyrhizobium diazoefficiens (strain JCM 10833 / BCRC 13528 / IAM 13628 / NBRC 14792 / USDA 110) protein is Heat-inducible transcription repressor HrcA.